Reading from the N-terminus, the 695-residue chain is Rho-related BTB domain-containing protein 1 (695 aa).

The segment at 1–210 (MDSDMDYERP…DNAIRAALIS (210 aa)) is rho-like. GTP contacts are provided by residues 21–28 (GDNAVGKT), 84–88 (DTFGD), and 140–143 (CQLD). BTB domains lie at 266–426 (ADVL…DEKE) and 484–551 (SDVT…SPNL). Residues 325-351 (SLGSAEEGKEGPQRTPQADPGASSGQD) form a disordered region.

The protein belongs to the small GTPase superfamily. Rho family. Highest expression in heart and testis.

This Mus musculus (Mouse) protein is Rho-related BTB domain-containing protein 1 (Rhobtb1).